Consider the following 299-residue polypeptide: Bifunctional protein FolD (299 aa).

Residues 169 to 171, S194, and I235 each bind NADP(+); that span reads GRS.

The protein belongs to the tetrahydrofolate dehydrogenase/cyclohydrolase family. As to quaternary structure, homodimer.

The catalysed reaction is (6R)-5,10-methylene-5,6,7,8-tetrahydrofolate + NADP(+) = (6R)-5,10-methenyltetrahydrofolate + NADPH. It catalyses the reaction (6R)-5,10-methenyltetrahydrofolate + H2O = (6R)-10-formyltetrahydrofolate + H(+). Its pathway is one-carbon metabolism; tetrahydrofolate interconversion. In terms of biological role, catalyzes the oxidation of 5,10-methylenetetrahydrofolate to 5,10-methenyltetrahydrofolate and then the hydrolysis of 5,10-methenyltetrahydrofolate to 10-formyltetrahydrofolate. This chain is Bifunctional protein FolD, found in Nostoc sp. (strain PCC 7120 / SAG 25.82 / UTEX 2576).